The primary structure comprises 311 residues: Aurora kinase (311 aa).

The 281-residue stretch at 20–300 (FEIGRFLGRG…IEDILRHPFL (281 aa)) folds into the Protein kinase domain. Lysine 49 lines the ATP pocket. Aspartate 143 serves as the catalytic Proton acceptor. The interval 189–216 (DFGWSVHHPTHGGRRRTQCGTLDYLPPE) is activation loop. Position 205 is a phosphothreonine; by autocatalysis (threonine 205). Positions 280–299 (MLIRSPEARISIEDILRHPF) match the Destruction (D)-box motif.

The protein belongs to the protein kinase superfamily. Ser/Thr protein kinase family. Aurora subfamily. In terms of assembly, interacts with EB1 (via C-terminal residues 101-238). Post-translationally, phosphorylated in mitosis and cytokinesis. Activated by autophosphorylation at Thr-205.

The protein localises to the nucleus. It is found in the cytoplasm. Its subcellular location is the cytoskeleton. The protein resides in the microtubule organizing center. It localises to the centrosome. The protein localises to the spindle. It is found in the spindle pole. Its subcellular location is the nucleus membrane. The catalysed reaction is L-seryl-[protein] + ATP = O-phospho-L-seryl-[protein] + ADP + H(+). The enzyme catalyses L-threonyl-[protein] + ATP = O-phospho-L-threonyl-[protein] + ADP + H(+). Its activity is regulated as follows. Activated by cell-cycle phase specific phosphorylation. Inhibited by ATP-competitive inhibitors N-[4-[[6-Methoxy-7-[3-(4-morpholinyl)propoxy]-4-quinazolinyl]amino]phenyl]benzamide (ZM447439) and cyclopropanecarboxylic acid-(3-(4-(3-trifluoromethylphenylamino)-pyrimidin-2-ylamino)-phenyl)-amide (CFPPA). Inhibition leads to reduced growth, increased cytokinesis, microtubular defects, and increased ploidy of the cells. Functionally, involved in regulation of the cell cycle. Required for mitotic cell division and cytokinesis. Based on its localization to centrosomes and spindle microtubules, as well as to various cytoskeletal components such as the median body, parental attachment disk, and anterior and posterior-lateral paraflagellar dense rods, may coordinate reorganization and segregation of tubulin-containing structures during mitosis and cytokinesis. May regulate microtubule disassembly by phosphorylating cytoskeletal proteins leading to their destabilization. Phosphorylates EB1 at 'Ser-148' in vitro. Phosphorylates histone H3 in vitro. This is Aurora kinase from Giardia intestinalis (strain ATCC 50803 / WB clone C6) (Giardia lamblia).